Here is a 118-residue protein sequence, read N- to C-terminus: uncharacterized protein (118 aa).

This is an uncharacterized protein from Escherichia coli (strain UTI89 / UPEC).